Consider the following 198-residue polypeptide: Holliday junction resolvase RecU (198 aa).

Positions 1-22 (MVNYPHKVSSQKRQTSLSQPKN) are disordered. The span at 11-22 (QKRQTSLSQPKN) shows a compositional bias: polar residues. T81, D83, E96, and Q115 together coordinate Mg(2+).

This sequence belongs to the RecU family. The cofactor is Mg(2+).

It localises to the cytoplasm. The catalysed reaction is Endonucleolytic cleavage at a junction such as a reciprocal single-stranded crossover between two homologous DNA duplexes (Holliday junction).. Endonuclease that resolves Holliday junction intermediates in genetic recombination. Cleaves mobile four-strand junctions by introducing symmetrical nicks in paired strands. Promotes annealing of linear ssDNA with homologous dsDNA. Required for DNA repair, homologous recombination and chromosome segregation. This is Holliday junction resolvase RecU from Streptococcus pneumoniae (strain P1031).